Reading from the N-terminus, the 216-residue chain is Inorganic pyrophosphatase (216 aa).

Positions 39, 53, and 65 each coordinate substrate. Positions 93, 98, and 131 each coordinate Mg(2+). Tyrosine 168 is a binding site for substrate.

This sequence belongs to the PPase family. As to quaternary structure, homohexamer. It depends on Mg(2+) as a cofactor.

It localises to the cytoplasm. The catalysed reaction is diphosphate + H2O = 2 phosphate + H(+). In terms of biological role, catalyzes the hydrolysis of inorganic pyrophosphate (PPi) forming two phosphate ions. This Chlamydia caviae (strain ATCC VR-813 / DSM 19441 / 03DC25 / GPIC) (Chlamydophila caviae) protein is Inorganic pyrophosphatase.